The following is a 154-amino-acid chain: Transcriptional repressor NrdR (154 aa).

A zinc finger spans residues 3-34; that stretch reads CPFCRHPDSRVVDSREADEGQAIRRRRSCPEC. One can recognise an ATP-cone domain in the interval 46–136; sequence LAVVKRSGVT…VYRGFSSAED (91 aa).

The protein belongs to the NrdR family. Zn(2+) is required as a cofactor.

Its function is as follows. Negatively regulates transcription of bacterial ribonucleotide reductase nrd genes and operons by binding to NrdR-boxes. The chain is Transcriptional repressor NrdR from Mycobacteroides abscessus (strain ATCC 19977 / DSM 44196 / CCUG 20993 / CIP 104536 / JCM 13569 / NCTC 13031 / TMC 1543 / L948) (Mycobacterium abscessus).